Consider the following 402-residue polypeptide: Xylose/arabinose-binding protein XylF (402 aa).

The chain crosses the membrane as a helical span at residues 38–58 (GIIAGVLAAFGAGFGSGYVTA).

The protein belongs to the bacterial solute-binding protein 2 family. In terms of assembly, the complex is composed of two ATP-binding proteins (XylG), two transmembrane proteins (XylH) and a solute-binding protein (XylF).

The protein resides in the cell membrane. Its function is as follows. Part of the ABC transporter complex XylFGH involved in the uptake of xylose and arabinose. In Sulfolobus acidocaldarius (strain ATCC 33909 / DSM 639 / JCM 8929 / NBRC 15157 / NCIMB 11770), this protein is Xylose/arabinose-binding protein XylF.